The primary structure comprises 753 residues: MTIINHTLGFPRVGLRRELKKAQESYWAGNSTREELLAVGRELRARHWDQQKQAGIDLLPVGDFAWYDHVLTTSLLLGNVPQRHQNNDGSVDIDTLFRIGRGRAPTGEPAAAAEMTKWFNTNYHYMVPEFVKGQQFKLTWTQLLEEVDEALALGHKVKPVLLGPITYLWLGKVKGEQFDRLSLLNDILPVYQQVLAELAKRGIEWVQIDEPALVLELPQAWLNAYKPAYDALQGQVKLLLTTYFEGVTPNLDTITALPVQGLHVDLVHGKDDVAELHKRLPSDWLLSAGLINGRNVWRADLTEKYAQIKDIVGKRDLWVASSCSLLHSPIDLSVETRLDAEVKSWFAFALQKCHELALLRDALNSGDTAALAEWSAPIQARRHSTRVHNPAVEKRLAAITAQDSQRANVYEVRAEAQRARFKLPAWPTTTIGSFPQTTEIRTLRLDFKKGNLDANNYRTGIAEHIKQAIVEQERLGLDVLVHGEAERNDMVEYFGEHLDGFVFTQNGWVQSYGSRCVKPPIVIGDVSRPAPITVEWAKYAQSLTDKPVKGMLTGPVTILCWSFPREDVSRETIAKQIALALRDEVADLEAAGIGIIQIDEPALREGLPLRRSDWDAYLQWGVEAFRINAAVAKDDTQIHTHMCYCEFNDIMDSIAALDADVITIETSRSDMELLESFEEFDYPNEIGPGVYDIHSPNVPSVEWIEALLKKAAKRIPAERLWVNPDCGLKTRGWPETRAALANMVQAAQNLRRG.

5-methyltetrahydropteroyltri-L-glutamate is bound by residues 17–20 (RELK) and lysine 117. L-homocysteine is bound by residues 431-433 (IGS) and glutamate 484. Residues 431 to 433 (IGS) and glutamate 484 contribute to the L-methionine site. Residues 515–516 (RC) and tryptophan 561 each bind 5-methyltetrahydropteroyltri-L-glutamate. Aspartate 599 contributes to the L-homocysteine binding site. Residue aspartate 599 participates in L-methionine binding. Glutamate 605 contacts 5-methyltetrahydropteroyltri-L-glutamate. 3 residues coordinate Zn(2+): histidine 641, cysteine 643, and glutamate 665. Histidine 694 acts as the Proton donor in catalysis. Cysteine 726 serves as a coordination point for Zn(2+).

This sequence belongs to the vitamin-B12 independent methionine synthase family. It depends on Zn(2+) as a cofactor.

It catalyses the reaction 5-methyltetrahydropteroyltri-L-glutamate + L-homocysteine = tetrahydropteroyltri-L-glutamate + L-methionine. Its pathway is amino-acid biosynthesis; L-methionine biosynthesis via de novo pathway; L-methionine from L-homocysteine (MetE route): step 1/1. Catalyzes the transfer of a methyl group from 5-methyltetrahydrofolate to homocysteine resulting in methionine formation. The polypeptide is 5-methyltetrahydropteroyltriglutamate--homocysteine methyltransferase (Escherichia coli O1:K1 / APEC).